The chain runs to 161 residues: Transcriptional regulator MraZ (161 aa).

SpoVT-AbrB domains are found at residues 7-55 (RYTN…GPAF) and 84-127 (SAEL…EPGA).

This sequence belongs to the MraZ family. In terms of assembly, forms oligomers.

It localises to the cytoplasm. The protein localises to the nucleoid. This is Transcriptional regulator MraZ from Parvibaculum lavamentivorans (strain DS-1 / DSM 13023 / NCIMB 13966).